A 655-amino-acid chain; its full sequence is 1-deoxy-D-xylulose-5-phosphate synthase (655 aa).

Thiamine diphosphate is bound by residues His-73 and 114–116 (SHA). Mg(2+) is bound at residue Asp-145. Thiamine diphosphate-binding positions include 146 to 147 (GA), Asn-174, Tyr-285, and Glu-367. Asn-174 provides a ligand contact to Mg(2+). The interval 626–655 (RQPAIEDDPTSPGEAAPAGERAGEAIGDQR) is disordered. Over residues 646-655 (RAGEAIGDQR) the composition is skewed to basic and acidic residues.

Belongs to the transketolase family. DXPS subfamily. Homodimer. Requires Mg(2+) as cofactor. The cofactor is thiamine diphosphate.

It catalyses the reaction D-glyceraldehyde 3-phosphate + pyruvate + H(+) = 1-deoxy-D-xylulose 5-phosphate + CO2. It participates in metabolic intermediate biosynthesis; 1-deoxy-D-xylulose 5-phosphate biosynthesis; 1-deoxy-D-xylulose 5-phosphate from D-glyceraldehyde 3-phosphate and pyruvate: step 1/1. In terms of biological role, catalyzes the acyloin condensation reaction between C atoms 2 and 3 of pyruvate and glyceraldehyde 3-phosphate to yield 1-deoxy-D-xylulose-5-phosphate (DXP). The sequence is that of 1-deoxy-D-xylulose-5-phosphate synthase from Frankia casuarinae (strain DSM 45818 / CECT 9043 / HFP020203 / CcI3).